A 718-amino-acid chain; its full sequence is Nucleolar protein 11 (718 aa).

Position 346 is an N6-methyllysine (lysine 346).

Interacts with UTP4. Interacts with FBL/fibrillarin in a transcription-dependent manner. May associate with the proposed t-UTP subcomplex of the SSU processome containing at least UTP4, WDR43, HEATR1, UTP15, WDR75.

The protein localises to the nucleus. It localises to the nucleolus. In terms of biological role, ribosome biogenesis factor. May be required for both optimal rDNA transcription and small subunit (SSU) pre-rRNA processing at sites A', A0, 1 and 2b. The protein is Nucleolar protein 11 (NOL11) of Pongo abelii (Sumatran orangutan).